The chain runs to 515 residues: ATP synthase subunit alpha (515 aa).

ATP is bound at residue 171–178 (GDRQTGKT).

Belongs to the ATPase alpha/beta chains family. As to quaternary structure, F-type ATPases have 2 components, CF(1) - the catalytic core - and CF(0) - the membrane proton channel. CF(1) has five subunits: alpha(3), beta(3), gamma(1), delta(1), epsilon(1). CF(0) has three main subunits: a(1), b(2) and c(9-12). The alpha and beta chains form an alternating ring which encloses part of the gamma chain. CF(1) is attached to CF(0) by a central stalk formed by the gamma and epsilon chains, while a peripheral stalk is formed by the delta and b chains.

The protein localises to the cell inner membrane. The catalysed reaction is ATP + H2O + 4 H(+)(in) = ADP + phosphate + 5 H(+)(out). Functionally, produces ATP from ADP in the presence of a proton gradient across the membrane. The alpha chain is a regulatory subunit. The chain is ATP synthase subunit alpha from Coxiella burnetii (strain CbuK_Q154) (Coxiella burnetii (strain Q154)).